The primary structure comprises 156 residues: Transcription elongation factor GreA (156 aa).

Positions 44–67 (ENAEYEAAKEKQAMIEGRIQDLCQ) form a coiled coil.

It belongs to the GreA/GreB family.

Necessary for efficient RNA polymerase transcription elongation past template-encoded arresting sites. The arresting sites in DNA have the property of trapping a certain fraction of elongating RNA polymerases that pass through, resulting in locked ternary complexes. Cleavage of the nascent transcript by cleavage factors such as GreA or GreB allows the resumption of elongation from the new 3'terminus. GreA releases sequences of 2 to 3 nucleotides. This is Transcription elongation factor GreA from Syntrophobacter fumaroxidans (strain DSM 10017 / MPOB).